Reading from the N-terminus, the 297-residue chain is ER membrane protein complex subunit 2-A (297 aa).

TPR repeat units follow at residues 87-120 (HRVK…DPTN), 155-188 (QEAW…NPHN), and 192-225 (YQQF…NNHN).

This sequence belongs to the EMC2 family. In terms of assembly, component of the ER membrane protein complex (EMC).

Its subcellular location is the endoplasmic reticulum membrane. Functionally, part of the endoplasmic reticulum membrane protein complex (EMC) that enables the energy-independent insertion into endoplasmic reticulum membranes of newly synthesized membrane proteins. Preferentially accommodates proteins with transmembrane domains that are weakly hydrophobic or contain destabilizing features such as charged and aromatic residues. Involved in the cotranslational insertion of multi-pass membrane proteins in which stop-transfer membrane-anchor sequences become ER membrane spanning helices. It is also required for the post-translational insertion of tail-anchored/TA proteins in endoplasmic reticulum membranes. By mediating the proper cotranslational insertion of N-terminal transmembrane domains in an N-exo topology, with translocated N-terminus in the lumen of the ER, controls the topology of multi-pass membrane proteins. By regulating the insertion of various proteins in membranes, it is indirectly involved in many cellular processes. In Xenopus laevis (African clawed frog), this protein is ER membrane protein complex subunit 2-A (emc2-a).